Reading from the N-terminus, the 256-residue chain is Triosephosphate isomerase (256 aa).

9-11 (NWK) is a substrate binding site. His-96 (electrophile) is an active-site residue. Glu-168 acts as the Proton acceptor in catalysis. Residues Ser-213 and 234–235 (GG) each bind substrate.

It belongs to the triosephosphate isomerase family. Homodimer.

The protein localises to the cytoplasm. It carries out the reaction D-glyceraldehyde 3-phosphate = dihydroxyacetone phosphate. The protein operates within carbohydrate biosynthesis; gluconeogenesis. It functions in the pathway carbohydrate degradation; glycolysis; D-glyceraldehyde 3-phosphate from glycerone phosphate: step 1/1. Its function is as follows. Involved in the gluconeogenesis. Catalyzes stereospecifically the conversion of dihydroxyacetone phosphate (DHAP) to D-glyceraldehyde-3-phosphate (G3P). This chain is Triosephosphate isomerase, found in Baumannia cicadellinicola subsp. Homalodisca coagulata.